Here is a 276-residue protein sequence, read N- to C-terminus: Protease HtpX homolog (276 aa).

A helical transmembrane segment spans residues 14-34 (IVLFALIGQALGGTGGMLLAF). Histidine 130 contacts Zn(2+). Glutamate 131 is a catalytic residue. Histidine 134 is a binding site for Zn(2+). 2 consecutive transmembrane segments (helical) span residues 145–165 (VAATLAGAITMLSRFALFFGG) and 171–191 (LVSLLMMILAPMAAMLIQSAI). Glutamate 196 is a binding site for Zn(2+).

This sequence belongs to the peptidase M48B family. Zn(2+) serves as cofactor.

It localises to the cell inner membrane. The sequence is that of Protease HtpX homolog from Salinibacter ruber (strain DSM 13855 / M31).